Consider the following 340-residue polypeptide: S-adenosylmethionine:tRNA ribosyltransferase-isomerase (340 aa).

The protein belongs to the QueA family. As to quaternary structure, monomer.

The protein localises to the cytoplasm. It catalyses the reaction 7-aminomethyl-7-carbaguanosine(34) in tRNA + S-adenosyl-L-methionine = epoxyqueuosine(34) in tRNA + adenine + L-methionine + 2 H(+). It functions in the pathway tRNA modification; tRNA-queuosine biosynthesis. Transfers and isomerizes the ribose moiety from AdoMet to the 7-aminomethyl group of 7-deazaguanine (preQ1-tRNA) to give epoxyqueuosine (oQ-tRNA). The protein is S-adenosylmethionine:tRNA ribosyltransferase-isomerase of Macrococcus caseolyticus (strain JCSC5402) (Macrococcoides caseolyticum).